The chain runs to 171 residues: MNTDIINIIDVLYVIYFMLPAYMANISGLVFGGGKPLDMGITLADGRRLIGDGVTWRGTAAGTFVGLVVGIIQGLLSGSIIIGVITGLLLGFGALMGDAAGSFIKRRLKIDRGRPAPILDQLDFVFGALILVSPIVVLPIDYIILIMLITLVLHLSANIIAYLLGMKDVWY.

Transmembrane regions (helical) follow at residues 11–31 (VLYV…GLVF), 65–85 (VGLV…IGVI), 129–149 (LILV…IMLI), and 151–171 (LVLH…DVWY).

It belongs to the CDP-archaeol synthase family. The cofactor is Mg(2+).

The protein resides in the cell membrane. It catalyses the reaction 2,3-bis-O-(geranylgeranyl)-sn-glycerol 1-phosphate + CTP + H(+) = CDP-2,3-bis-O-(geranylgeranyl)-sn-glycerol + diphosphate. It functions in the pathway membrane lipid metabolism; glycerophospholipid metabolism. Functionally, catalyzes the formation of CDP-2,3-bis-(O-geranylgeranyl)-sn-glycerol (CDP-archaeol) from 2,3-bis-(O-geranylgeranyl)-sn-glycerol 1-phosphate (DGGGP) and CTP. This reaction is the third ether-bond-formation step in the biosynthesis of archaeal membrane lipids. The chain is CDP-archaeol synthase from Methanothermobacter thermautotrophicus (strain ATCC 29096 / DSM 1053 / JCM 10044 / NBRC 100330 / Delta H) (Methanobacterium thermoautotrophicum).